We begin with the raw amino-acid sequence, 469 residues long: Glutamate--tRNA ligase 1 (469 aa).

The 'HIGH' region signature appears at 10–20 (PSPTGYLHIGG). Positions 99, 101, 126, and 128 each coordinate Zn(2+). Residues 237–241 (RLSKR) carry the 'KMSKS' region motif. Lysine 240 is a binding site for ATP.

This sequence belongs to the class-I aminoacyl-tRNA synthetase family. Glutamate--tRNA ligase type 1 subfamily. Monomer. Zn(2+) serves as cofactor.

It localises to the cytoplasm. It catalyses the reaction tRNA(Glu) + L-glutamate + ATP = L-glutamyl-tRNA(Glu) + AMP + diphosphate. Functionally, catalyzes the attachment of glutamate to tRNA(Glu) in a two-step reaction: glutamate is first activated by ATP to form Glu-AMP and then transferred to the acceptor end of tRNA(Glu). In Coxiella burnetii (strain CbuK_Q154) (Coxiella burnetii (strain Q154)), this protein is Glutamate--tRNA ligase 1.